The chain runs to 151 residues: MQRANIILLSLILMGYLAESALLATAGCILLVMRLSKLNRLMFLLERRGLEVGLIFLMLSVLVPLAHDNIVYKELVMKTLSPQGLLALIGGTLATHMNGEGLKLLKLDPQLIFGMVIGSLIGIVFLGGIPIGPLMAAGLTALFLEVIYWFK.

The next 4 helical transmembrane spans lie at 6 to 26 (IILL…LATA), 52 to 72 (VGLI…NIVY), 75 to 95 (LVMK…TLAT), and 111 to 131 (LIFG…GIPI).

It belongs to the UPF0756 family.

The protein resides in the cell membrane. The chain is UPF0756 membrane protein Dred_1097 from Desulforamulus reducens (strain ATCC BAA-1160 / DSM 100696 / MI-1) (Desulfotomaculum reducens).